We begin with the raw amino-acid sequence, 849 residues long: Ribosome biogenesis protein ERB1 (849 aa).

The tract at residues 1–130 (MARNSIKKSP…PKDDDLSRIN (130 aa)) is disordered. Acidic residues-rich tracts occupy residues 29 to 44 (EAEE…DELN) and 51 to 123 (ASDD…EPKD). Residues 286–405 (RFVPSKHEAK…LRQVPGYQDS (120 aa)) form a required for interaction with NOP7 region. Residues 405–441 (SVRERFERSLDLYLAPRVRHNKLNIDPDSLIPDLPSP) are required for interaction with YTM1. WD repeat units follow at residues 457 to 496 (GHTG…QVYK) and 505 to 545 (NNED…FDIE). A compositionally biased stretch (basic and acidic residues) spans 569–581 (KISSQKEEDNKES). A disordered region spans residues 569–619 (KISSQKEEDNKESDNEDEDEEEDNDDDDDDDEPETSSTVEPKKEVAKWYPP). Over residues 582-602 (DNEDEDEEEDNDDDDDDDEPE) the composition is skewed to acidic residues. WD repeat units lie at residues 633-675 (QCRK…SQSP), 678-716 (KSKG…LLKK), 719-758 (PGVR…TPYK), 762-802 (YHEK…DLMT), and 818-849 (INQI…LWTT).

This sequence belongs to the WD repeat BOP1/ERB1 family. Component of the NOP7 complex, composed of ERB1, NOP7 and YTM1. The complex is held together by ERB1, which interacts with NOP7 via its N-terminal domain and with YTM1 via a high-affinity interaction between the seven-bladed beta-propeller domains of the 2 proteins. The NOP7 complex associates with the 66S pre-ribosome.

The protein localises to the nucleus. It is found in the nucleolus. It localises to the nucleoplasm. Functionally, component of the NOP7 complex, which is required for maturation of the 25S and 5.8S ribosomal RNAs and formation of the 60S ribosome. The polypeptide is Ribosome biogenesis protein ERB1 (Candida albicans (strain SC5314 / ATCC MYA-2876) (Yeast)).